The chain runs to 220 residues: Guanylate kinase (220 aa).

The region spanning G14–N194 is the Guanylate kinase-like domain. S21–S28 contributes to the ATP binding site.

This sequence belongs to the guanylate kinase family.

The protein localises to the cytoplasm. The catalysed reaction is GMP + ATP = GDP + ADP. In terms of biological role, essential for recycling GMP and indirectly, cGMP. In Brucella abortus (strain 2308), this protein is Guanylate kinase.